The following is a 952-amino-acid chain: Protein translocase subunit SecA (952 aa).

Residues glutamine 135, 153 to 157, and aspartate 575 contribute to the ATP site; that span reads GEGKT. Positions 614–624 are enriched in basic and acidic residues; it reads RHESRRIDNQL. 2 disordered regions span residues 614-636 and 916-946; these read RHESRRIDNQLRGRSGRQGDPGS and VSAKAATQSTTPAAKEIGRNDPCPCGSGKKY. Cysteine 938, cysteine 940, cysteine 949, and cysteine 950 together coordinate Zn(2+).

This sequence belongs to the SecA family. Monomer and homodimer. Part of the essential Sec protein translocation apparatus which comprises SecA, SecYEG and auxiliary proteins SecDF. Other proteins may also be involved. The cofactor is Zn(2+).

Its subcellular location is the cell membrane. It localises to the cytoplasm. The enzyme catalyses ATP + H2O + cellular proteinSide 1 = ADP + phosphate + cellular proteinSide 2.. Part of the Sec protein translocase complex. Interacts with the SecYEG preprotein conducting channel. Has a central role in coupling the hydrolysis of ATP to the transfer of proteins into and across the cell membrane, serving as an ATP-driven molecular motor driving the stepwise translocation of polypeptide chains across the membrane. This chain is Protein translocase subunit SecA, found in Dehalococcoides mccartyi (strain ATCC BAA-2100 / JCM 16839 / KCTC 5957 / BAV1).